The sequence spans 1977 residues: Echinoderm microtubule-associated protein-like 5 (1977 aa).

WD repeat units lie at residues 59–100 (GHSD…TVSV), 104–145 (VHTH…MLSM), 148–187 (GHTD…LTPK), 195–233 (GDLQ…RTIQ), 235–273 (AHTA…TVID), 280–321 (GYKG…LIMQ), 323–362 (HCEG…LIAR), 406–445 (DRKE…KKVG), 449–488 (GSLS…EVTS), and 561–601 (GHSA…KLKD). Positions 609–629 (ESLAESNSDESDSDLSDVPEL) are disordered. Residues 615–629 (NSDESDSDLSDVPEL) show a composition bias toward acidic residues. 9 WD repeats span residues 725-766 (GHDD…PLSI), 770-811 (YHQY…KLSV), 814-853 (GSKD…LIGK), 861-900 (GKND…KTVK), 901-940 (AHDG…KTYA), 996-1035 (HMEG…CMLA), 1038-1077 (KLKK…DLVS), 1080-1120 (HRKD…RVGV), and 1236-1276 (AHST…HREK). Disordered regions lie at residues 1276 to 1297 (KKYC…YDSD) and 1323 to 1363 (PHLQ…NVGK). Residues 1281–1294 (SEESDIDSEEDGGY) are compositionally biased toward acidic residues. Basic and acidic residues predominate over residues 1326-1337 (QQKEPSVDERQG). WD repeat units lie at residues 1420-1471 (EHND…TLSI), 1475-1516 (SHSK…KIAS), 1519-1558 (GHNQ…LLSK), 1568-1606 (ARMQ…RVVA), 1608-1654 (AHNG…RAFR), 1699-1739 (GHVD…MLNK), 1741-1782 (NLGH…GKKR), 1783-1822 (DRRC…TLNR), 1895-1934 (AEKA…KFAK), and 1940-1977 (GHSP…HMPH).

The protein belongs to the WD repeat EMAP family.

It localises to the cytoplasm. Its subcellular location is the cytoskeleton. Its function is as follows. May modify the assembly dynamics of microtubules, such that microtubules are slightly longer, but more dynamic. In Mus musculus (Mouse), this protein is Echinoderm microtubule-associated protein-like 5 (Eml5).